Reading from the N-terminus, the 392-residue chain is Small ribosomal subunit protein bS1 (392 aa).

S1 motif domains follow at residues 16 to 90 (GDKV…LSKR), 108 to 173 (DEII…LSRK), 194 to 262 (GDVI…LSIK), and 279 to 348 (DDVI…LSIK).

Belongs to the bacterial ribosomal protein bS1 family.

Its function is as follows. Binds mRNA; thus facilitating recognition of the initiation point. It is needed to translate mRNA with a short Shine-Dalgarno (SD) purine-rich sequence. This is Small ribosomal subunit protein bS1 (rpsA) from Staphylococcus haemolyticus (strain JCSC1435).